Reading from the N-terminus, the 217-residue chain is Ribonuclease HII (217 aa).

The region spanning 27 to 216 (SQVAGVDEAG…VKESIQEGVC (190 aa)) is the RNase H type-2 domain. Positions 33, 34, and 126 each coordinate a divalent metal cation.

Belongs to the RNase HII family. The cofactor is Mn(2+). Mg(2+) is required as a cofactor.

Its subcellular location is the cytoplasm. The enzyme catalyses Endonucleolytic cleavage to 5'-phosphomonoester.. Endonuclease that specifically degrades the RNA of RNA-DNA hybrids. In Chlamydia trachomatis serovar D (strain ATCC VR-885 / DSM 19411 / UW-3/Cx), this protein is Ribonuclease HII (rnhB).